Consider the following 1205-residue polypeptide: PAN2-PAN3 deadenylation complex catalytic subunit Pan2 (1205 aa).

WD repeat units lie at residues 153 to 193 (DESE…QKYA), 195 to 231 (ETPGVTIMRQTNRFFFCGHTSGKVSLRDLRSFKVEHE), 244 to 280 (VHGNLLAACGFSSRLTGLACDRFLKVYDLRMMRAITP), and 328 to 367 (PVGPLLMTFDVSASKQALAFGDSEGCVHLWTDSPEPSFNP). The segment at 368 to 484 (YSRETEFALP…PTGREEEPLH (117 aa)) is linker. One can recognise a USP domain in the interval 485–924 (TVSKKYRKVT…VPAILYYVKR (440 aa)). Ser784 bears the Phosphoserine mark. Positions 975 to 1147 (VGLDAEFVTL…EDARTALQLY (173 aa)) constitute an Exonuclease domain. A divalent metal cation-binding residues include Asp978, Glu980, Asp1087, and Asp1139. Positions 1179–1205 (WKVPEPESQSSPKSKAGLRPGALGWVG) are disordered. The span at 1184–1193 (PESQSSPKSK) shows a compositional bias: low complexity. Ser1189 bears the Phosphoserine mark.

The protein belongs to the peptidase C19 family. PAN2 subfamily. Forms a heterotrimer with an asymmetric homodimer of the regulatory subunit PAN3 to form the poly(A)-nuclease (PAN) deadenylation complex. Interacts with PAN3 isoform 1/Pan3L and isoform 3/Pan3S. Interacts with ZFP36. Requires a divalent metal cation as cofactor.

The protein resides in the cytoplasm. Its subcellular location is the P-body. It localises to the nucleus. It carries out the reaction Exonucleolytic cleavage of poly(A) to 5'-AMP.. Positively regulated by the regulatory subunit PAN3. Its function is as follows. Catalytic subunit of the poly(A)-nuclease (PAN) deadenylation complex, one of two cytoplasmic mRNA deadenylases involved in general and miRNA-mediated mRNA turnover. PAN specifically shortens poly(A) tails of RNA and the activity is stimulated by poly(A)-binding protein (PABP). PAN deadenylation is followed by rapid degradation of the shortened mRNA tails by the CCR4-NOT complex. Deadenylated mRNAs are then degraded by two alternative mechanisms, namely exosome-mediated 3'-5' exonucleolytic degradation, or deadenylation-dependent mRNA decaping and subsequent 5'-3' exonucleolytic degradation by XRN1. Also acts as an important regulator of the HIF1A-mediated hypoxic response. Required for HIF1A mRNA stability independent of poly(A) tail length regulation. The protein is PAN2-PAN3 deadenylation complex catalytic subunit Pan2 of Rattus norvegicus (Rat).